Consider the following 116-residue polypeptide: Proline-rich protein 9 (116 aa).

The protein is Proline-rich protein 9 (PRR9) of Bos taurus (Bovine).